A 128-amino-acid chain; its full sequence is Cytochrome c-type biogenesis protein CcmE (128 aa).

At 1-8 the chain is on the cytoplasmic side; the sequence is MQKIVRNR. Residues 9 to 29 traverse the membrane as a helical; Signal-anchor for type II membrane protein segment; that stretch reads LIKIIICFCSACLGISIILYN. At 30–128 the chain is on the periplasmic side; it reads LEKNIIFFFP…KHDENYRPPS (99 aa). Residues histidine 120 and tyrosine 124 each contribute to the heme site.

The protein belongs to the CcmE/CycJ family.

Its subcellular location is the cell inner membrane. Functionally, heme chaperone required for the biogenesis of c-type cytochromes. Transiently binds heme delivered by CcmC and transfers the heme to apo-cytochromes in a process facilitated by CcmF and CcmH. The chain is Cytochrome c-type biogenesis protein CcmE from Rickettsia prowazekii (strain Madrid E).